Consider the following 399-residue polypeptide: Acetate kinase (399 aa).

Residue asparagine 10 coordinates Mg(2+). Lysine 17 is a binding site for ATP. Arginine 91 contacts substrate. The active-site Proton donor/acceptor is aspartate 148. ATP is bound by residues 208–212 (HLGNG), 283–285 (DCR), and 331–335 (GIGEN). A Mg(2+)-binding site is contributed by glutamate 385.

Belongs to the acetokinase family. As to quaternary structure, homodimer. The cofactor is Mg(2+). Requires Mn(2+) as cofactor.

It localises to the cytoplasm. It catalyses the reaction acetate + ATP = acetyl phosphate + ADP. Its pathway is metabolic intermediate biosynthesis; acetyl-CoA biosynthesis; acetyl-CoA from acetate: step 1/2. Functionally, catalyzes the formation of acetyl phosphate from acetate and ATP. Can also catalyze the reverse reaction. The protein is Acetate kinase of Shewanella sp. (strain MR-4).